Reading from the N-terminus, the 89-residue chain is Small ribosomal subunit protein uS15 (89 aa).

This sequence belongs to the universal ribosomal protein uS15 family. In terms of assembly, part of the 30S ribosomal subunit. Forms a bridge to the 50S subunit in the 70S ribosome, contacting the 23S rRNA.

One of the primary rRNA binding proteins, it binds directly to 16S rRNA where it helps nucleate assembly of the platform of the 30S subunit by binding and bridging several RNA helices of the 16S rRNA. Functionally, forms an intersubunit bridge (bridge B4) with the 23S rRNA of the 50S subunit in the ribosome. This Leifsonia xyli subsp. xyli (strain CTCB07) protein is Small ribosomal subunit protein uS15.